Here is an 82-residue protein sequence, read N- to C-terminus: Small ribosomal subunit protein uS17 (82 aa).

The protein belongs to the universal ribosomal protein uS17 family. In terms of assembly, part of the 30S ribosomal subunit.

In terms of biological role, one of the primary rRNA binding proteins, it binds specifically to the 5'-end of 16S ribosomal RNA. This is Small ribosomal subunit protein uS17 from Nitrobacter hamburgensis (strain DSM 10229 / NCIMB 13809 / X14).